Here is a 436-residue protein sequence, read N- to C-terminus: Gamma-glutamyl phosphate reductase (436 aa).

It belongs to the gamma-glutamyl phosphate reductase family.

The protein localises to the cytoplasm. The enzyme catalyses L-glutamate 5-semialdehyde + phosphate + NADP(+) = L-glutamyl 5-phosphate + NADPH + H(+). It functions in the pathway amino-acid biosynthesis; L-proline biosynthesis; L-glutamate 5-semialdehyde from L-glutamate: step 2/2. Functionally, catalyzes the NADPH-dependent reduction of L-glutamate 5-phosphate into L-glutamate 5-semialdehyde and phosphate. The product spontaneously undergoes cyclization to form 1-pyrroline-5-carboxylate. The chain is Gamma-glutamyl phosphate reductase from Polaromonas sp. (strain JS666 / ATCC BAA-500).